The sequence spans 209 residues: Kynurenine formamidase (209 aa).

Substrate is bound at residue tryptophan 18. Positions 48, 52, and 54 each coordinate Zn(2+). Histidine 58 functions as the Proton donor/acceptor in the catalytic mechanism. Positions 160 and 172 each coordinate Zn(2+).

The protein belongs to the Cyclase 1 superfamily. KynB family. In terms of assembly, homodimer. Requires Zn(2+) as cofactor.

It catalyses the reaction N-formyl-L-kynurenine + H2O = L-kynurenine + formate + H(+). It functions in the pathway amino-acid degradation; L-tryptophan degradation via kynurenine pathway; L-kynurenine from L-tryptophan: step 2/2. Functionally, catalyzes the hydrolysis of N-formyl-L-kynurenine to L-kynurenine, the second step in the kynurenine pathway of tryptophan degradation. The protein is Kynurenine formamidase of Sphingopyxis alaskensis (strain DSM 13593 / LMG 18877 / RB2256) (Sphingomonas alaskensis).